We begin with the raw amino-acid sequence, 361 residues long: Anthranilate phosphoribosyltransferase (361 aa).

Residues G101, 104–105 (GD), T109, 111–114 (NIST), 129–137 (KHGNRGVSS), and S141 each bind 5-phospho-alpha-D-ribose 1-diphosphate. G101 contacts anthranilate. Position 113 (S113) interacts with Mg(2+). Residue N132 participates in anthranilate binding. R187 serves as a coordination point for anthranilate. Mg(2+)-binding residues include D245 and E246.

Belongs to the anthranilate phosphoribosyltransferase family. In terms of assembly, homodimer. The cofactor is Mg(2+).

The enzyme catalyses N-(5-phospho-beta-D-ribosyl)anthranilate + diphosphate = 5-phospho-alpha-D-ribose 1-diphosphate + anthranilate. It functions in the pathway amino-acid biosynthesis; L-tryptophan biosynthesis; L-tryptophan from chorismate: step 2/5. Functionally, catalyzes the transfer of the phosphoribosyl group of 5-phosphorylribose-1-pyrophosphate (PRPP) to anthranilate to yield N-(5'-phosphoribosyl)-anthranilate (PRA). In Shewanella denitrificans (strain OS217 / ATCC BAA-1090 / DSM 15013), this protein is Anthranilate phosphoribosyltransferase.